A 73-amino-acid chain; its full sequence is Neurotoxin Cex13 (73 aa).

An N-terminal signal peptide occupies residues 1-7 (ATGNVWA). Residues 8 to 71 (KDGYLVIIKT…TWPLPDKTCG (64 aa)) enclose the LCN-type CS-alpha/beta domain. Cystine bridges form between C19/C70, C23/C46, C32/C51, and C36/C53. At C70 the chain carries Cysteine amide. The propeptide occupies 71 to 73 (GTK).

It belongs to the long (4 C-C) scorpion toxin superfamily. Sodium channel inhibitor family. Beta subfamily. In terms of tissue distribution, expressed by the venom gland.

The protein localises to the secreted. In terms of biological role, beta toxins bind voltage-independently at site-4 of sodium channels (Nav) and shift the voltage of activation toward more negative potentials thereby affecting sodium channel activation and promoting spontaneous and repetitive firing. The chain is Neurotoxin Cex13 from Centruroides exilicauda (Bark scorpion).